The primary structure comprises 299 residues: MAFDTHHVKKRNFSNSIDLPRKRISNFTSKNMKEVKRSPKQLAAYISRTVAQAVKSPEKLRKVLYHRKLVRRSFPNPCYKTKQSPKSGGCDMANKENELACAGHLPENLRHDSRTFVINTSDSGSSQTESPSSKYSGFFSEVSQDHETMAQVLFSRNLRLNVALTFWRKRSISELVAYLVRIEDLGVVVDCLPVLTNSLQEEKQYISLGCCVDLLPLVKSLLQSRFEEYVIVGLNWLQAVIKRWWSELSSTSEIISDGNIKILKQQLSGLWEQESHLTLVPGYTGNIAKDVDAYLLQLH.

Positions 8–15 match the Nuclear localization signal motif; the sequence is VKKRNFSN. Ser-56 bears the Phosphoserine mark.

Interacts with KATNA1 and KATNAL1; these interactions are competed by KATNB1 which has a higher affinity for them.

The protein localises to the nucleus. The protein resides in the cytoplasm. It is found in the cytoskeleton. Its subcellular location is the spindle pole. Regulates microtubule-severing activity of KATNAL1 in a concentration-dependent manner in vitro. The chain is KATNB1-like protein 1 (Katnbl1) from Mus musculus (Mouse).